Consider the following 238-residue polypeptide: AGEGNGRGPYVQADLAYAYEHITHDYPKPTDPSKGKLSTVSDYFRNIRTHSIHPRVSVGYDFGGWRIAADYARYRKWNDSKYSVSIKNLQRRTSNGNRRDRKTENQENGSFHAVSSLGLSAVYDFKLNDKFKPYIGARVAYGHVRHSIDSTKKITQFLTTAGARGTVSTVHPPYKSTQDAHHQSDSIRRVGLGVIAGVGFGITPKLTLDAGYRYHNWGRLENTRFKTHEASLGVRYRF.

A signal peptide is located at residue A1. Residues 88–109 (NLQRRTSNGNRRDRKTENQENG) form a disordered region.

This sequence belongs to the opacity porin family.

The protein localises to the cell outer membrane. Functionally, implicated in a number of adherence functions. OPA proteins are implicated in pathogenesis and are subject to phase variation. The polypeptide is Opacity protein opA68 (Neisseria gonorrhoeae).